The primary structure comprises 108 residues: Large ribosomal subunit protein bL31B (108 aa).

The interval 88 to 108 is disordered; sequence AAVEEAPAVKSKKKAPIKKKK. Basic residues predominate over residues 97–108; that stretch reads KSKKKAPIKKKK.

Belongs to the bacterial ribosomal protein bL31 family. Type B subfamily. In terms of assembly, part of the 50S ribosomal subunit.

The sequence is that of Large ribosomal subunit protein bL31B from Chlamydia abortus (strain DSM 27085 / S26/3) (Chlamydophila abortus).